A 155-amino-acid chain; its full sequence is Snaclec bothrojaracin subunit alpha (155 aa).

An N-terminal signal peptide occupies residues 1 to 23 (MGRFLFVSFGLLVVFLSLSGTAA). Intrachain disulfides connect Cys25-Cys36, Cys53-Cys150, and Cys125-Cys142. The region spanning 32–151 (HEGHCYKFFQ…CGQQNPFVCK (120 aa)) is the C-type lectin domain.

It belongs to the snaclec family. Heterodimer of subunits alpha and beta; disulfide-linked. In terms of tissue distribution, expressed by the venom gland.

It is found in the secreted. Its function is as follows. This potent antithrombotic agent acts in a calcium-independent manner. Exerts its anticoagulant effect by two distinct mechanisms. It binds to activated thrombin through exosite 1, blocking fibrinogen clotting, platelet activation, factor V activation and other effects, and it interacts with prothrombin (F2), decreasing its proteolytic activation -especially in the presence of factor Va. In vivo, intravenous injection before thrombosis induction causes a significant decrease in thrombus weight. Furthermore, BJC shows a prolonged effect by remaining in the plasma bound to prothrombin for at least 12 hours. The polypeptide is Snaclec bothrojaracin subunit alpha (Bothrops jararaca (Jararaca)).